Reading from the N-terminus, the 123-residue chain is Ribonuclease P protein component (123 aa).

This sequence belongs to the RnpA family. Consists of a catalytic RNA component (M1 or rnpB) and a protein subunit.

The catalysed reaction is Endonucleolytic cleavage of RNA, removing 5'-extranucleotides from tRNA precursor.. In terms of biological role, RNaseP catalyzes the removal of the 5'-leader sequence from pre-tRNA to produce the mature 5'-terminus. It can also cleave other RNA substrates such as 4.5S RNA. The protein component plays an auxiliary but essential role in vivo by binding to the 5'-leader sequence and broadening the substrate specificity of the ribozyme. The protein is Ribonuclease P protein component of Bordetella bronchiseptica (strain ATCC BAA-588 / NCTC 13252 / RB50) (Alcaligenes bronchisepticus).